Here is a 141-residue protein sequence, read N- to C-terminus: Large ribosomal subunit protein uL11 (141 aa).

The protein belongs to the universal ribosomal protein uL11 family. In terms of assembly, part of the ribosomal stalk of the 50S ribosomal subunit. Interacts with L10 and the large rRNA to form the base of the stalk. L10 forms an elongated spine to which L12 dimers bind in a sequential fashion forming a multimeric L10(L12)X complex. One or more lysine residues are methylated.

In terms of biological role, forms part of the ribosomal stalk which helps the ribosome interact with GTP-bound translation factors. In Helicobacter pylori (strain P12), this protein is Large ribosomal subunit protein uL11.